Reading from the N-terminus, the 352-residue chain is Holliday junction branch migration complex subunit RuvB (352 aa).

Residues 4–185 (ADRLIAATGP…FGIVQRLEFY (182 aa)) are large ATPase domain (RuvB-L). ATP is bound by residues Ile-24, Arg-25, Gly-66, Lys-69, Thr-70, Thr-71, 132–134 (EDF), Arg-175, Tyr-185, and Arg-222. Thr-70 is a Mg(2+) binding site. Positions 186 to 256 (STADLATIVS…VADLALNLLD (71 aa)) are small ATPAse domain (RuvB-S). Positions 259–352 (EHGFDHQDRR…VDEFLDAVDD (94 aa)) are head domain (RuvB-H). DNA is bound by residues Arg-295, Arg-314, and Arg-319.

The protein belongs to the RuvB family. Homohexamer. Forms an RuvA(8)-RuvB(12)-Holliday junction (HJ) complex. HJ DNA is sandwiched between 2 RuvA tetramers; dsDNA enters through RuvA and exits via RuvB. An RuvB hexamer assembles on each DNA strand where it exits the tetramer. Each RuvB hexamer is contacted by two RuvA subunits (via domain III) on 2 adjacent RuvB subunits; this complex drives branch migration. In the full resolvosome a probable DNA-RuvA(4)-RuvB(12)-RuvC(2) complex forms which resolves the HJ.

Its subcellular location is the cytoplasm. It carries out the reaction ATP + H2O = ADP + phosphate + H(+). In terms of biological role, the RuvA-RuvB-RuvC complex processes Holliday junction (HJ) DNA during genetic recombination and DNA repair, while the RuvA-RuvB complex plays an important role in the rescue of blocked DNA replication forks via replication fork reversal (RFR). RuvA specifically binds to HJ cruciform DNA, conferring on it an open structure. The RuvB hexamer acts as an ATP-dependent pump, pulling dsDNA into and through the RuvAB complex. RuvB forms 2 homohexamers on either side of HJ DNA bound by 1 or 2 RuvA tetramers; 4 subunits per hexamer contact DNA at a time. Coordinated motions by a converter formed by DNA-disengaged RuvB subunits stimulates ATP hydrolysis and nucleotide exchange. Immobilization of the converter enables RuvB to convert the ATP-contained energy into a lever motion, pulling 2 nucleotides of DNA out of the RuvA tetramer per ATP hydrolyzed, thus driving DNA branch migration. The RuvB motors rotate together with the DNA substrate, which together with the progressing nucleotide cycle form the mechanistic basis for DNA recombination by continuous HJ branch migration. Branch migration allows RuvC to scan DNA until it finds its consensus sequence, where it cleaves and resolves cruciform DNA. The polypeptide is Holliday junction branch migration complex subunit RuvB (Pseudomonas fluorescens (strain SBW25)).